The following is a 200-amino-acid chain: Transcription factor FapR (200 aa).

The protein belongs to the FapR family.

Functionally, transcriptional factor involved in regulation of membrane lipid biosynthesis by repressing genes involved in fatty acid and phospholipid metabolism. In Caldanaerobacter subterraneus subsp. tengcongensis (strain DSM 15242 / JCM 11007 / NBRC 100824 / MB4) (Thermoanaerobacter tengcongensis), this protein is Transcription factor FapR.